The following is a 502-amino-acid chain: ATP synthase subunit alpha (502 aa).

Residue 169 to 176 (GDRQTGKT) participates in ATP binding.

Belongs to the ATPase alpha/beta chains family. As to quaternary structure, F-type ATPases have 2 components, CF(1) - the catalytic core - and CF(0) - the membrane proton channel. CF(1) has five subunits: alpha(3), beta(3), gamma(1), delta(1), epsilon(1). CF(0) has three main subunits: a(1), b(2) and c(9-12). The alpha and beta chains form an alternating ring which encloses part of the gamma chain. CF(1) is attached to CF(0) by a central stalk formed by the gamma and epsilon chains, while a peripheral stalk is formed by the delta and b chains.

The protein resides in the cell inner membrane. It catalyses the reaction ATP + H2O + 4 H(+)(in) = ADP + phosphate + 5 H(+)(out). Its function is as follows. Produces ATP from ADP in the presence of a proton gradient across the membrane. The alpha chain is a regulatory subunit. This is ATP synthase subunit alpha from Thermodesulfovibrio yellowstonii (strain ATCC 51303 / DSM 11347 / YP87).